A 179-amino-acid polypeptide reads, in one-letter code: 3-hydroxyanthranilate 3,4-dioxygenase (179 aa).

An O2-binding site is contributed by arginine 47. Histidine 51, glutamate 57, and histidine 96 together coordinate Fe cation. Substrate is bound at residue glutamate 57. The substrate site is built by arginine 100 and glutamate 110. Fe cation contacts are provided by cysteine 125, cysteine 128, cysteine 162, and cysteine 165.

The protein belongs to the 3-HAO family. Fe(2+) serves as cofactor.

It carries out the reaction 3-hydroxyanthranilate + O2 = (2Z,4Z)-2-amino-3-carboxymuconate 6-semialdehyde. Its pathway is cofactor biosynthesis; NAD(+) biosynthesis; quinolinate from L-kynurenine: step 3/3. In terms of biological role, catalyzes the oxidative ring opening of 3-hydroxyanthranilate to 2-amino-3-carboxymuconate semialdehyde, which spontaneously cyclizes to quinolinate. In Bacillus cereus (strain 03BB102), this protein is 3-hydroxyanthranilate 3,4-dioxygenase.